The sequence spans 425 residues: Formyl-CoA:oxalate CoA-transferase (425 aa).

Residues 17 to 18 (QS), Arg38, 72 to 75 (LDTK), 96 to 98 (NFG), Arg104, and 136 to 139 (KVYE) contribute to the CoA site. Asp168 serves as the catalytic Nucleophile. 247 to 249 (GGQ) contacts substrate.

It belongs to the CoA-transferase III family. Frc subfamily. Homodimer.

The catalysed reaction is formyl-CoA + oxalate = oxalyl-CoA + formate. It participates in metabolic intermediate degradation; oxalate degradation; CO(2) and formate from oxalate: step 1/2. In terms of biological role, involved in the catabolism of oxalate and in the adapatation to low pH via the induction of the oxalate-dependent acid tolerance response (ATR). Catalyzes the transfer of the CoA moiety from formyl-CoA to oxalate. The polypeptide is Formyl-CoA:oxalate CoA-transferase (Rhodopseudomonas palustris (strain BisA53)).